A 203-amino-acid polypeptide reads, in one-letter code: Holliday junction branch migration complex subunit RuvA (203 aa).

The segment at 1–64 is domain I; that stretch reads MFAYFRGRLT…EDAFLLYGFS (64 aa). The tract at residues 65–143 is domain II; the sequence is SESERQLFRL…KMSPDGGKTI (79 aa). The flexible linker stretch occupies residues 144–150; it reads ASGSGGN. The tract at residues 151-203 is domain III; it reads LALQIKDDALNALITLGFSKPAAQKAVTGILEGNPSLSVEEVVKSALVSIHNS.

This sequence belongs to the RuvA family. Homotetramer. Forms an RuvA(8)-RuvB(12)-Holliday junction (HJ) complex. HJ DNA is sandwiched between 2 RuvA tetramers; dsDNA enters through RuvA and exits via RuvB. An RuvB hexamer assembles on each DNA strand where it exits the tetramer. Each RuvB hexamer is contacted by two RuvA subunits (via domain III) on 2 adjacent RuvB subunits; this complex drives branch migration. In the full resolvosome a probable DNA-RuvA(4)-RuvB(12)-RuvC(2) complex forms which resolves the HJ.

The protein localises to the cytoplasm. Functionally, the RuvA-RuvB-RuvC complex processes Holliday junction (HJ) DNA during genetic recombination and DNA repair, while the RuvA-RuvB complex plays an important role in the rescue of blocked DNA replication forks via replication fork reversal (RFR). RuvA specifically binds to HJ cruciform DNA, conferring on it an open structure. The RuvB hexamer acts as an ATP-dependent pump, pulling dsDNA into and through the RuvAB complex. HJ branch migration allows RuvC to scan DNA until it finds its consensus sequence, where it cleaves and resolves the cruciform DNA. The polypeptide is Holliday junction branch migration complex subunit RuvA (Chlorobium limicola (strain DSM 245 / NBRC 103803 / 6330)).